The following is a 214-amino-acid chain: Small ribosomal subunit protein uS2 (214 aa).

Belongs to the universal ribosomal protein uS2 family.

The protein is Small ribosomal subunit protein uS2 of Methanococcoides burtonii (strain DSM 6242 / NBRC 107633 / OCM 468 / ACE-M).